We begin with the raw amino-acid sequence, 580 residues long: MNFAVLPPEVNSARIFAGAGLGPMLAAASAWDGLAEELHAAAGSFASVTTGLTGDAWHGPASLAMTRAASPYVGWLNTAAGQAAQAAGQARLAASAFEATLAATVSPAMVAANRTRLASLVAANLLGQNAPAIAAAEAEYEQIWAQDVAAMFGYHSAASAVATQLAPIQEGLQQQLQNVLAQLASGNLGSGNVGVGNIGNDNIGNANIGFGNRGDANIGIGNIGDRNLGIGNTGNWNIGIGITGNGQIGFGKPANPDVLVVGNGGPGVTALVMGGTDSLLPLPNIPLLEYAARFITPVHPGYTATFLETPSQFFPFTGLNSLTYDVSVAQGVTNLHTAIMAQLAAGNEVVVFGTSQSATIATFEMRYLQSLPAHLRPGLDELSFTLTGNPNRPDGGILTRFGFSIPQLGFTLSGATPADAYPTVDYAFQYDGVNDFPKYPLNVFATANAIAGILFLHSGLIALPPDLASGVVQPVSSPDVLTTYILLPSQDLPLLVPLRAIPLLGNPLADLIQPDLRVLVELGYDRTAHQDVPSPFGLFPDVDWAEVAADLQQGAVQGVNDALSGLGLPPPWQPALPRLF.

The PE-PPE domain maps to 300-525; the sequence is PGYTATFLET…LRVLVELGYD (226 aa).

The protein belongs to the mycobacterial PPE family.

This is an uncharacterized protein from Mycobacterium tuberculosis (strain CDC 1551 / Oshkosh).